The primary structure comprises 473 residues: Serine incorporator 3 (473 aa).

Residues Met1–Lys96 lie on the Extracellular side of the membrane. An N-linked (GlcNAc...) asparagine glycan is attached at Asn34. Residues Ala97–Phe117 traverse the membrane as a helical segment. The Cytoplasmic portion of the chain corresponds to Lys118–Gly132. The chain crosses the membrane as a helical span at residues Phe133 to Gly153. Over Gly154–Val159 the chain is Extracellular. A helical membrane pass occupies residues Trp160–Val180. Topologically, residues Asp181–Tyr203 are cytoplasmic. A helical transmembrane segment spans residues Ala204–Leu224. Topologically, residues Tyr225–Phe239 are extracellular. Residues Phe240 to Ile260 form a helical membrane-spanning segment. Residues Gln261–Ser329 are Cytoplasmic-facing. Residues Gly330 to Tyr350 traverse the membrane as a helical segment. Over Ser351–Ser406 the chain is Extracellular. Ser371 carries the phosphoserine modification. The chain crosses the membrane as a helical span at residues Leu407–Tyr427. The Cytoplasmic portion of the chain corresponds to Ser428–Lys446. A helical membrane pass occupies residues Ile447–Leu467. Topologically, residues Thr468–Ser473 are extracellular.

This sequence belongs to the TDE1 family. In terms of processing, N-glycosylated. Ubiquitous. Expression levels were increased fourfold to tenfold in lung tumor tissues compared with normal pulmonary tissues.

The protein localises to the cell membrane. The protein resides in the golgi apparatus membrane. It localises to the cytoplasm. It is found in the perinuclear region. The enzyme catalyses a 1,2-diacyl-sn-glycero-3-phospho-L-serine(in) = a 1,2-diacyl-sn-glycero-3-phospho-L-serine(out). It catalyses the reaction a 1,2-diacyl-sn-glycero-3-phosphocholine(in) = a 1,2-diacyl-sn-glycero-3-phosphocholine(out). It carries out the reaction a 1,2-diacyl-sn-glycero-3-phosphoethanolamine(in) = a 1,2-diacyl-sn-glycero-3-phosphoethanolamine(out). Restriction factor required to restrict infectivity of lentiviruses, such as HIV-1: acts by inhibiting an early step of viral infection. Impairs the penetration of the viral particle into the cytoplasm. Non-ATP-dependent, non-specific lipid transporter for phosphatidylserine, phosphatidylcholine, and phosphatidylethanolamine. Functions as a scramblase that flips lipids in both directions across the membrane. Phospholipid scrambling results in HIV-1 surface exposure of phosphatidylserine and loss of membrane asymmetry, which leads to changes in HIV-1 Env conformation and loss of infectivity. The chain is Serine incorporator 3 from Homo sapiens (Human).